A 430-amino-acid polypeptide reads, in one-letter code: Glutamate-1-semialdehyde 2,1-aminomutase (430 aa).

Lysine 270 carries the N6-(pyridoxal phosphate)lysine modification.

It belongs to the class-III pyridoxal-phosphate-dependent aminotransferase family. HemL subfamily. As to quaternary structure, homodimer. Pyridoxal 5'-phosphate is required as a cofactor.

It is found in the cytoplasm. The catalysed reaction is (S)-4-amino-5-oxopentanoate = 5-aminolevulinate. It participates in porphyrin-containing compound metabolism; protoporphyrin-IX biosynthesis; 5-aminolevulinate from L-glutamyl-tRNA(Glu): step 2/2. In Cupriavidus necator (strain ATCC 17699 / DSM 428 / KCTC 22496 / NCIMB 10442 / H16 / Stanier 337) (Ralstonia eutropha), this protein is Glutamate-1-semialdehyde 2,1-aminomutase.